Here is a 241-residue protein sequence, read N- to C-terminus: Ribosomal RNA small subunit methyltransferase J (241 aa).

S-adenosyl-L-methionine contacts are provided by residues 94-95 (RD) and D163.

The protein belongs to the methyltransferase superfamily. RsmJ family.

Its subcellular location is the cytoplasm. It carries out the reaction guanosine(1516) in 16S rRNA + S-adenosyl-L-methionine = N(2)-methylguanosine(1516) in 16S rRNA + S-adenosyl-L-homocysteine + H(+). Functionally, specifically methylates the guanosine in position 1516 of 16S rRNA. The polypeptide is Ribosomal RNA small subunit methyltransferase J (Francisella tularensis subsp. tularensis (strain FSC 198)).